Reading from the N-terminus, the 450-residue chain is Vimentin beta (450 aa).

Residues 1–81 (MSSRTSTSSY…FGLADAINTE (81 aa)) are head. Over residues 24–38 (STYSSRQYSSPGRTT) the composition is skewed to polar residues. A disordered region spans residues 24 to 56 (STYSSRQYSSPGRTTSRVSYSSASSTSPSLYMS). Over residues 39–56 (SRVSYSSASSTSPSLYMS) the composition is skewed to low complexity. Residues 82 to 117 (FKANRTNEKAEMQHVNDRFASYIEEVRFLEQQNKIL) form a coil 1A region. Residues 89–397 (EKAEMQHVND…NLLEGEEYRI (309 aa)) form the IF rod domain. The interval 118–139 (TAELEQMRGKGSSRVGDLYEDE) is linker 1. A coil 1B region spans residues 140–231 (MRELRRQVDQ…KLHDEELAEL (92 aa)). Positions 232-254 (QMQIQERHVQIDMEVAKPDLTAA) are linker 12. Residues 255-393 (LRDVRQQYET…ATYRNLLEGE (139 aa)) form a coil 2 region. The segment at 394-450 (EYRITTPFPNLSSLSLRESMKEIRPAMDSLSKKVVIKTIETRDGHIINQSTQKDNLE) is tail.

Belongs to the intermediate filament family. In terms of assembly, homomer. In terms of processing, one of the most prominent phosphoproteins in various cells of mesenchymal origin. Phosphorylation is enhanced during cell division, at which time vimentin filaments are significantly reorganized. In terms of tissue distribution, expressed in low amounts in retina, optic nerve, brain, and spinal cord and in very high amounts in eye lens.

Vimentins are class-III intermediate filaments found in various non-epithelial cells, especially mesenchymal cells. Vimentin is attached to the nucleus, endoplasmic reticulum, and mitochondria, either laterally or terminally. This is Vimentin beta from Carassius auratus (Goldfish).